The following is a 395-amino-acid chain: MDFNMKKLASDAGIFFTRAVQFTEEKFGQAEKTELDAHFESLLARADSTKNWTEKILRQTEVLLQPNPSARVEEFLYEKLDRKVPSRVTNGELLAQYMAEAASELGPTTPYGKTLIKVAEAEKHLGAAERDFIHTASINFLTPLRNFLEGDWKTISKERRLLQNRRLDLDASKARLKKAKAAEAKATTVPDFQETRPRNYILSASASALWNDEVDKAEQELRVAQTEFDRQAEVTRLLLEGISSTHVNHLRCLHEFIESQTTYYAQCYRHMLDLQKQLGRFPGTFVGTAEPASPPLSSTSPTTTAATMPMGPSVADLAPPGEAALRLEEVAPPASGTRKARVLYDYEAADSSELALLADELITVYSLPGMDPDWLIGERGNKKGKVPVTYLELLS.

The residue at position 1 (methionine 1) is an N-acetylmethionine. The membrane-binding amphipathic helix stretch occupies residues 1 to 27; sequence MDFNMKKLASDAGIFFTRAVQFTEEKF. Serine 10 is modified (phosphoserine). The 264-residue stretch at 24-287 folds into the BAR domain; the sequence is EEKFGQAEKT…LGRFPGTFVG (264 aa). Coiled coils occupy residues 116–132 and 206–240; these read IKVA…ERDF and ASAL…LLLE. One can recognise an SH3 domain in the interval 335 to 395; that stretch reads SGTRKARVLY…VPVTYLELLS (61 aa). The residue at position 395 (serine 395) is a Phosphoserine.

This sequence belongs to the endophilin family. In terms of assembly, homodimer, and heterodimer with SH3GLB1.

It localises to the cytoplasm. This chain is Endophilin-B2 (SH3GLB2), found in Bos taurus (Bovine).